Reading from the N-terminus, the 98-residue chain is Integration host factor subunit alpha (98 aa).

A disordered region spans residues phenylalanine 49–isoleucine 71.

Belongs to the bacterial histone-like protein family. In terms of assembly, heterodimer of an alpha and a beta chain.

Functionally, this protein is one of the two subunits of integration host factor, a specific DNA-binding protein that functions in genetic recombination as well as in transcriptional and translational control. In Shewanella halifaxensis (strain HAW-EB4), this protein is Integration host factor subunit alpha.